The chain runs to 662 residues: ATP-dependent zinc metalloprotease YME1 homolog (662 aa).

206–213 is an ATP binding site; the sequence is GPPGVGKT. Histidine 425 contributes to the Zn(2+) binding site. Glutamate 426 is a catalytic residue. Zn(2+) contacts are provided by histidine 429 and aspartate 503.

It in the N-terminal section; belongs to the AAA ATPase family. The protein in the C-terminal section; belongs to the peptidase M41 family. The cofactor is Zn(2+).

Its function is as follows. Putative ATP-dependent protease. The sequence is that of ATP-dependent zinc metalloprotease YME1 homolog from Schistosoma mansoni (Blood fluke).